Reading from the N-terminus, the 399-residue chain is S-adenosylmethionine synthase (399 aa).

Residue His17 participates in ATP binding. Asp19 serves as a coordination point for Mg(2+). Glu45 provides a ligand contact to K(+). 2 residues coordinate L-methionine: Glu58 and Gln101. Residues 101–111 form a flexible loop region; that stretch reads QSADIAMGVDQ. Residues 177–179, 244–245, Asp253, 259–260, Ala276, and Lys280 each bind ATP; these read DGK, RF, and RK. Asp253 serves as a coordination point for L-methionine. Lys284 contacts L-methionine.

Belongs to the AdoMet synthase family. As to quaternary structure, homotetramer; dimer of dimers. Requires Mg(2+) as cofactor. It depends on K(+) as a cofactor.

Its subcellular location is the cytoplasm. It carries out the reaction L-methionine + ATP + H2O = S-adenosyl-L-methionine + phosphate + diphosphate. The protein operates within amino-acid biosynthesis; S-adenosyl-L-methionine biosynthesis; S-adenosyl-L-methionine from L-methionine: step 1/1. Catalyzes the formation of S-adenosylmethionine (AdoMet) from methionine and ATP. The overall synthetic reaction is composed of two sequential steps, AdoMet formation and the subsequent tripolyphosphate hydrolysis which occurs prior to release of AdoMet from the enzyme. This Bacillus cereus (strain ATCC 10987 / NRS 248) protein is S-adenosylmethionine synthase.